The primary structure comprises 284 residues: Bifunctional protein FolD (284 aa).

NADP(+) is bound by residues Gly164–Ser166 and Ser189.

This sequence belongs to the tetrahydrofolate dehydrogenase/cyclohydrolase family. In terms of assembly, homodimer.

It catalyses the reaction (6R)-5,10-methylene-5,6,7,8-tetrahydrofolate + NADP(+) = (6R)-5,10-methenyltetrahydrofolate + NADPH. The enzyme catalyses (6R)-5,10-methenyltetrahydrofolate + H2O = (6R)-10-formyltetrahydrofolate + H(+). It participates in one-carbon metabolism; tetrahydrofolate interconversion. Catalyzes the oxidation of 5,10-methylenetetrahydrofolate to 5,10-methenyltetrahydrofolate and then the hydrolysis of 5,10-methenyltetrahydrofolate to 10-formyltetrahydrofolate. This is Bifunctional protein FolD from Listeria monocytogenes serotype 4b (strain F2365).